The sequence spans 367 residues: tRNA-specific 2-thiouridylase MnmA (367 aa).

Residues 12-19 and Met38 each bind ATP; that span reads GMSGGVDS. Residues 98 to 100 form an interaction with target base in tRNA region; the sequence is NPD. Residue Cys103 is the Nucleophile of the active site. The cysteines at positions 103 and 200 are disulfide-linked. Gly128 is an ATP binding site. Residues 150-152 are interaction with tRNA; the sequence is KDQ. The active-site Cysteine persulfide intermediate is the Cys200. The segment at 312-313 is interaction with tRNA; that stretch reads RY.

This sequence belongs to the MnmA/TRMU family. In terms of assembly, interacts with TusE.

The protein resides in the cytoplasm. It carries out the reaction S-sulfanyl-L-cysteinyl-[protein] + uridine(34) in tRNA + AH2 + ATP = 2-thiouridine(34) in tRNA + L-cysteinyl-[protein] + A + AMP + diphosphate + H(+). In terms of biological role, catalyzes the 2-thiolation of uridine at the wobble position (U34) of tRNA(Lys), tRNA(Glu) and tRNA(Gln), leading to the formation of s(2)U34, the first step of tRNA-mnm(5)s(2)U34 synthesis. Sulfur is provided by IscS, via a sulfur-relay system. Binds ATP and its substrate tRNAs. This chain is tRNA-specific 2-thiouridylase MnmA, found in Blochmanniella pennsylvanica (strain BPEN).